Here is a 481-residue protein sequence, read N- to C-terminus: Glutamate--tRNA ligase 2 (481 aa).

Positions 17–27 (PSPTGFLHIGG) match the 'HIGH' region motif. Residues 118–139 (AEQRAKKQPQRYDGRWRDRDPS) are compositionally biased toward basic and acidic residues. The segment at 118-143 (AEQRAKKQPQRYDGRWRDRDPSEAPA) is disordered. The 'KMSKS' region motif lies at 246-250 (KLSKR). Lys-249 provides a ligand contact to ATP.

It belongs to the class-I aminoacyl-tRNA synthetase family. Glutamate--tRNA ligase type 1 subfamily. In terms of assembly, monomer.

It is found in the cytoplasm. The enzyme catalyses tRNA(Glu) + L-glutamate + ATP = L-glutamyl-tRNA(Glu) + AMP + diphosphate. Catalyzes the attachment of glutamate to tRNA(Glu) in a two-step reaction: glutamate is first activated by ATP to form Glu-AMP and then transferred to the acceptor end of tRNA(Glu). The sequence is that of Glutamate--tRNA ligase 2 from Zymomonas mobilis subsp. mobilis (strain ATCC 31821 / ZM4 / CP4).